The primary structure comprises 335 residues: Anthranilate phosphoribosyltransferase (335 aa).

Residues Gly79, 82–83, Thr87, 89–92, 107–115, and Ser119 contribute to the 5-phospho-alpha-D-ribose 1-diphosphate site; these read GD, NVST, and KHCNKGVSS. Gly79 is an anthranilate binding site. Ser91 is a Mg(2+) binding site. Asn110 is an anthranilate binding site. Arg165 is a binding site for anthranilate. The Mg(2+) site is built by Asp223 and Glu224.

Belongs to the anthranilate phosphoribosyltransferase family. In terms of assembly, homodimer. Mg(2+) is required as a cofactor.

It catalyses the reaction N-(5-phospho-beta-D-ribosyl)anthranilate + diphosphate = 5-phospho-alpha-D-ribose 1-diphosphate + anthranilate. The protein operates within amino-acid biosynthesis; L-tryptophan biosynthesis; L-tryptophan from chorismate: step 2/5. Functionally, catalyzes the transfer of the phosphoribosyl group of 5-phosphorylribose-1-pyrophosphate (PRPP) to anthranilate to yield N-(5'-phosphoribosyl)-anthranilate (PRA). The protein is Anthranilate phosphoribosyltransferase of Buchnera aphidicola subsp. Schizaphis graminum (strain Sg).